The chain runs to 491 residues: Probable cytosol aminopeptidase (491 aa).

Residues lysine 261 and aspartate 266 each contribute to the Mn(2+) site. Residue lysine 273 is part of the active site. Residues aspartate 284, aspartate 343, and glutamate 345 each coordinate Mn(2+). Arginine 347 is a catalytic residue.

This sequence belongs to the peptidase M17 family. It depends on Mn(2+) as a cofactor.

It is found in the cytoplasm. It catalyses the reaction Release of an N-terminal amino acid, Xaa-|-Yaa-, in which Xaa is preferably Leu, but may be other amino acids including Pro although not Arg or Lys, and Yaa may be Pro. Amino acid amides and methyl esters are also readily hydrolyzed, but rates on arylamides are exceedingly low.. The enzyme catalyses Release of an N-terminal amino acid, preferentially leucine, but not glutamic or aspartic acids.. Functionally, presumably involved in the processing and regular turnover of intracellular proteins. Catalyzes the removal of unsubstituted N-terminal amino acids from various peptides. This chain is Probable cytosol aminopeptidase, found in Stenotrophomonas maltophilia (strain K279a).